We begin with the raw amino-acid sequence, 214 residues long: Calcineurin B homologous protein 3 (214 aa).

G2 is lipidated: N-myristoyl glycine. The EF-hand domain maps to 110–145 (CRKDKLRFLFNMYDTDNDSKITLEEYRKVVEELLSG). Ca(2+) contacts are provided by D123, D125, D127, K129, and E134.

This sequence belongs to the calcineurin regulatory subunit family. CHP subfamily. In terms of assembly, monomer. Homodimer.

Its subcellular location is the nucleus. It is found in the cytoplasm. The protein localises to the membrane. The protein resides in the cell membrane. It localises to the cell projection. Its subcellular location is the lamellipodium. It is found in the ruffle membrane. Functionally, functions as an integral cofactor in cell pH regulation by controlling plasma membrane-type Na(+)/H(+) exchange activity. Promotes the induction of hematopoietic stem cell differentiation toward megakaryocytic lineage. Essential for the coupling of ERK cascade activation with the expression of ETS family genes in megakaryocytic differentiation. Also involved in granulocytic differentiation in a ERK-dependent manner. Inhibits the phosphatase activity of calcineurin. This Xenopus tropicalis (Western clawed frog) protein is Calcineurin B homologous protein 3 (tesc).